Here is a 498-residue protein sequence, read N- to C-terminus: N-succinylglutamate 5-semialdehyde dehydrogenase 1 (498 aa).

231-236 (GSSNTG) lines the NAD(+) pocket. Catalysis depends on residues Glu-254 and Cys-288.

Belongs to the aldehyde dehydrogenase family. AstD subfamily.

The enzyme catalyses N-succinyl-L-glutamate 5-semialdehyde + NAD(+) + H2O = N-succinyl-L-glutamate + NADH + 2 H(+). It functions in the pathway amino-acid degradation; L-arginine degradation via AST pathway; L-glutamate and succinate from L-arginine: step 4/5. In terms of biological role, catalyzes the NAD-dependent reduction of succinylglutamate semialdehyde into succinylglutamate. This Shewanella denitrificans (strain OS217 / ATCC BAA-1090 / DSM 15013) protein is N-succinylglutamate 5-semialdehyde dehydrogenase 1.